We begin with the raw amino-acid sequence, 479 residues long: ATP synthase subunit beta (479 aa).

An ATP-binding site is contributed by 168-175 (GGAGVGKT).

The protein belongs to the ATPase alpha/beta chains family. F-type ATPases have 2 components, CF(1) - the catalytic core - and CF(0) - the membrane proton channel. CF(1) has five subunits: alpha(3), beta(3), gamma(1), delta(1), epsilon(1). CF(0) has three main subunits: a(1), b(2) and c(9-12). The alpha and beta chains form an alternating ring which encloses part of the gamma chain. CF(1) is attached to CF(0) by a central stalk formed by the gamma and epsilon chains, while a peripheral stalk is formed by the delta and b chains.

It localises to the cell membrane. It carries out the reaction ATP + H2O + 4 H(+)(in) = ADP + phosphate + 5 H(+)(out). Functionally, produces ATP from ADP in the presence of a proton gradient across the membrane. The catalytic sites are hosted primarily by the beta subunits. The polypeptide is ATP synthase subunit beta (Parafrankia sp. (strain EAN1pec)).